The chain runs to 156 residues: SPbeta prophage-derived uncharacterized protein YosH (156 aa).

This chain is SPbeta prophage-derived uncharacterized protein YosH (yosH), found in Bacillus subtilis (strain 168).